A 412-amino-acid chain; its full sequence is tRNA (guanine-N(7)-)-methyltransferase non-catalytic subunit WDR4 (412 aa).

Position 2 is an N-acetylalanine (Ala2). WD repeat units lie at residues 3–40 (GSVGLALCGQTLVVRGGSRFLATSIASSDDDSLFIYDC), 50–90 (NKGE…LFRT), 94–131 (QCLSVRTVARRCTALTFIASEEKVLVADKSGDVYSFSV), 137–174 (CGRLELGHLSMLLDVAVSPDDRFILTADRDEKIRVSWA), 180–218 (IESFCLGHTEFVSRISVVPTQPGLLLSSSGDGTLRLWEY), 230–273 (ASLQ…IFQL), and 319–373 (PVGD…SYLK). The disordered stretch occupies residues 377–412 (ERLQQQLEKKQRRRSPPPGPDGHAKKMRPGEATLSC). 2 positions are modified to phosphoserine: Ser391 and Ser411.

The protein belongs to the WD repeat TRM82 family. Non-catalytic component of the METTL1-WDR4 complex, composed of METTL1 and WDR4. Interacts with FEN1; the interaction is direct.

It localises to the nucleus. It is found in the chromosome. It participates in tRNA modification; N(7)-methylguanine-tRNA biosynthesis. Functionally, non-catalytic component of the METTL1-WDR4 methyltransferase complex required for the formation of N(7)-methylguanine in a subset of RNA species, such as tRNAs, mRNAs and microRNAs (miRNAs). In the METTL1-WDR4 methyltransferase complex, WDR4 acts as a scaffold for tRNA-binding. Required for the formation of N(7)-methylguanine at position 46 (m7G46) in a large subset of tRNAs that contain the 5'-RAGGU-3' motif within the variable loop. M7G46 interacts with C13-G22 in the D-loop to stabilize tRNA tertiary structure and protect tRNAs from decay. Also required for the formation of N(7)-methylguanine at internal sites in a subset of mRNAs. Also required for methylation of a specific subset of miRNAs, such as let-7. Independently of METTL1, also plays a role in genome stability: localizes at the DNA replication site and regulates endonucleolytic activities of FEN1. The protein is tRNA (guanine-N(7)-)-methyltransferase non-catalytic subunit WDR4 of Homo sapiens (Human).